A 411-amino-acid polypeptide reads, in one-letter code: Bifunctional protein GlmU (411 aa).

The segment at 1–204 is pyrophosphorylase; it reads MDAIILCAGK…NGKLHGVELK (204 aa). Residues 6 to 9, Q74, and G79 contribute to the UTP site; that span reads LCAG. Residues T80, G130, N142, and N158 each coordinate N-acetyl-alpha-D-glucosamine 1-phosphate. Positions 205–224 are linker; sequence GYWNDIGHPWDVLSANNHFL. The interval 225–411 is N-acetyltransferase; it reads NKIISKVSGK…DELVITKKRN (187 aa). H308 functions as the Proton acceptor in the catalytic mechanism. 2 residues coordinate acetyl-CoA: A384 and K401.

The protein in the N-terminal section; belongs to the N-acetylglucosamine-1-phosphate uridyltransferase family. It in the C-terminal section; belongs to the transferase hexapeptide repeat family.

It catalyses the reaction N-acetyl-alpha-D-glucosamine 1-phosphate + UTP + H(+) = UDP-N-acetyl-alpha-D-glucosamine + diphosphate. The enzyme catalyses alpha-D-glucosamine 1-phosphate + acetyl-CoA = N-acetyl-alpha-D-glucosamine 1-phosphate + CoA + H(+). It functions in the pathway nucleotide-sugar biosynthesis; UDP-N-acetyl-alpha-D-glucosamine biosynthesis; N-acetyl-alpha-D-glucosamine 1-phosphate from alpha-D-glucosamine 6-phosphate (route II): step 2/2. The protein operates within nucleotide-sugar biosynthesis; UDP-N-acetyl-alpha-D-glucosamine biosynthesis; UDP-N-acetyl-alpha-D-glucosamine from N-acetyl-alpha-D-glucosamine 1-phosphate: step 1/1. In terms of biological role, catalyzes the last two sequential reactions in the de novo biosynthetic pathway for UDP-N-acetyl-glucosamine (UDP-GlcNAc). Responsible for the acetylation of GlcN-1-P to GlcNAc-1-P, and for the uridyl transfer from UTP to GlcNAc-1-P, to produce UDP-GlcNAc and pyrophosphate. This is Bifunctional protein GlmU from Methanococcus maripaludis (strain DSM 14266 / JCM 13030 / NBRC 101832 / S2 / LL).